The primary structure comprises 937 residues: MALLLEGTSLARKVREELREQISSIKSVDPYFNVSLKIIQVGGREDSNVYVRMKTRAANEAGISCEHVNFPEDITEYDLLLAIKGFNEDPTVHGIIVQLPLPAHINEQIITEAVAPEKDVDGFCETNLGKLTKREGQPLFTACTPKGIMCILKHYGINVQGKHAVVIGRSNIVGRPMSILLEKANATVTLCHSKTESIADIVRTADIVVAAIGIPHFVKADWLKKGVVAIDVGINSIPDATKKSGYRLTGDIDFENAKEVASAITPVPGSVGPMTVAMLLQNVVESAVRFRKMSRKRKPTLLPLKLQTPVPSDIEIARSQTPKNIGDLASEIGIAKSELEFYGSHKAKVNLEILQRLAHRRDGHYVVVTGITPTPFGEGKSTLTAGLVQALSNLDKLAIACVRQPSQGPTFGIKGGAAGGGYSQFIPMEEFNLHLTGDIHAITAATNLLAAAIDTRMFHENTQSDAALYKRLTLVKGNKREFAPVMFRRLKKLGIDKTNPEELTEEEQRKFARLDIEPSTISWNRTLDVNDRFLRKITIGENPTEKGFTRQTGFDLSVASECMSVLALATDLKDMRERLGRMVVASNKSGEPVTADDLGVGGALTVLLKDAIKPTLMQTLEGTPALVHAGPFANISIGASSILADRIALKLAGTEVDEDAKKEAGYVVTEAGFASDIGMEKFFNIKCRTSGLKPDAIVIVATVQALKLHGGGPPVGPGKPIPEVYKREDVDLVRKGCANLAKHISNARKYGLPVVVAINKFSSDSPNEISAIREEALAAGATDAVDSNHWAEGGKGALGVARALINACENVDSEFRLLYDVHEPIEKKIEIIAKEMYGADGIELSPLAKERLETFTKQGYNNLPICIAKTQYSLSHDPDLKGAPTNFTVPIRDMRLSAGAGFIYPLAAAISTIPGLPTKPAYYNIDIAENGDIVGLS.

A methylenetetrahydrofolate dehydrogenase and cyclohydrolase region spans residues 1–309 (MALLLEGTSL…TLLPLKLQTP (309 aa)). Substrate is bound by residues 50–54 (YVRMK) and 97–99 (VQL). Residues 168-170 (GRS) and Ser193 contribute to the NADP(+) site. Residue 268–272 (PGSVG) participates in substrate binding. A formyltetrahydrofolate synthetase region spans residues 310–937 (VPSDIEIARS…AENGDIVGLS (628 aa)). 374–381 (TPFGEGKS) contacts ATP.

In the N-terminal section; belongs to the tetrahydrofolate dehydrogenase/cyclohydrolase family. This sequence in the C-terminal section; belongs to the formate--tetrahydrofolate ligase family. Homodimer.

It is found in the cytoplasm. It carries out the reaction (6R)-5,10-methylene-5,6,7,8-tetrahydrofolate + NADP(+) = (6R)-5,10-methenyltetrahydrofolate + NADPH. The enzyme catalyses (6R)-5,10-methenyltetrahydrofolate + H2O = (6R)-10-formyltetrahydrofolate + H(+). The catalysed reaction is (6S)-5,6,7,8-tetrahydrofolate + formate + ATP = (6R)-10-formyltetrahydrofolate + ADP + phosphate. The protein operates within one-carbon metabolism; tetrahydrofolate interconversion. The polypeptide is C-1-tetrahydrofolate synthase, cytoplasmic (Schizosaccharomyces pombe (strain 972 / ATCC 24843) (Fission yeast)).